Here is a 127-residue protein sequence, read N- to C-terminus: Large ribosomal subunit protein eL8 (127 aa).

This sequence belongs to the eukaryotic ribosomal protein eL8 family. Part of the 50S ribosomal subunit. Component of box C/D small ribonucleoprotein (sRNP) particles that contain rpl7ae, FlpA and nop5, plus a guide RNA. These sRNP particles form homodimers, giving rise to an asymmetric holoenzyme. Probably part of the RNase P complex.

The protein resides in the cytoplasm. In terms of biological role, multifunctional RNA-binding protein that recognizes the K-turn motif in ribosomal RNA, the RNA component of RNase P, box H/ACA, box C/D and box C'/D' sRNAs. This chain is Large ribosomal subunit protein eL8, found in Saccharolobus solfataricus (strain ATCC 35092 / DSM 1617 / JCM 11322 / P2) (Sulfolobus solfataricus).